The primary structure comprises 335 residues: tRNA N6-adenosine threonylcarbamoyltransferase (335 aa).

A divalent metal cation is bound by residues His109, His113, and Tyr130. Residues Tyr130–Gly134, Asp162, Gly177, Glu181, and Asn266 each bind substrate. Position 294 (Asp294) interacts with a divalent metal cation.

It belongs to the KAE1 / TsaD family. In terms of assembly, component of the EKC/KEOPS complex composed of at least GON7, TP53RK, TPRKB, OSGEP and LAGE3; the whole complex dimerizes. Requires a divalent metal cation as cofactor.

It localises to the cytoplasm. The protein resides in the nucleus. The catalysed reaction is L-threonylcarbamoyladenylate + adenosine(37) in tRNA = N(6)-L-threonylcarbamoyladenosine(37) in tRNA + AMP + H(+). Functionally, component of the EKC/KEOPS complex that is required for the formation of a threonylcarbamoyl group on adenosine at position 37 (t(6)A37) in tRNAs that read codons beginning with adenine. The complex is probably involved in the transfer of the threonylcarbamoyl moiety of threonylcarbamoyl-AMP (TC-AMP) to the N6 group of A37. OSGEP likely plays a direct catalytic role in this reaction, but requires other protein(s) of the complex to fulfill this activity. The polypeptide is tRNA N6-adenosine threonylcarbamoyltransferase (Osgep) (Rattus norvegicus (Rat)).